Consider the following 335-residue polypeptide: Beta-ketoacyl-[acyl-carrier-protein] synthase III (335 aa).

Residues cysteine 119 and histidine 261 contribute to the active site. The tract at residues 262 to 266 (QANQR) is ACP-binding. Asparagine 291 is an active-site residue.

It belongs to the thiolase-like superfamily. FabH family. Homodimer.

The protein localises to the cytoplasm. It carries out the reaction malonyl-[ACP] + acetyl-CoA + H(+) = 3-oxobutanoyl-[ACP] + CO2 + CoA. It participates in lipid metabolism; fatty acid biosynthesis. Functionally, catalyzes the condensation reaction of fatty acid synthesis by the addition to an acyl acceptor of two carbons from malonyl-ACP. Catalyzes the first condensation reaction which initiates fatty acid synthesis and may therefore play a role in governing the total rate of fatty acid production. Possesses both acetoacetyl-ACP synthase and acetyl transacylase activities. Its substrate specificity determines the biosynthesis of branched-chain and/or straight-chain of fatty acids. This is Beta-ketoacyl-[acyl-carrier-protein] synthase III from Prochlorococcus marinus (strain MIT 9312).